Reading from the N-terminus, the 505-residue chain is Catalase (505 aa).

Residues His58 and Asn131 contribute to the active site. A heme-binding site is contributed by Tyr341.

The protein belongs to the catalase family. Heme serves as cofactor.

The enzyme catalyses 2 H2O2 = O2 + 2 H2O. Decomposes hydrogen peroxide into water and oxygen; serves to protect cells from the toxic effects of hydrogen peroxide. This Methanosarcina barkeri (strain Fusaro / DSM 804) protein is Catalase (kat).